Here is a 509-residue protein sequence, read N- to C-terminus: MDIRAAEISAILKDQIKNFGKEAEVSEVGQVLSVGDGIARVYGLDNVQAGEMVEFPGGIRGMALNLESDNVGVVIFGSDRDIKEGDTVKRTGAIVDVPVGPELLGRVVDALGNPIDGKGPINATRRSRVDVKAPGIIPRKSVHEPMSTGLKAIDALIPVGRGQRELVIGDRQTGKTAILLDAFLNQKAIHDNGPEGEKLYCVYVAVGQKRSTVAQFVKVLEERGALKYSIIVAATASDPAPMQFLAPFAGCAMGEYFRDNGMHALIGYDDLSKQAVSYRQMSLLLRRPPGREAYPGDVFYLHSRLLERAAKMNDDKGAGSLTALPVIETQGNDVSAFIPTNVISITDGQIFLETDLFYQGIRPAVNVGLSVSRVGSSAQIKAMKQVAGSIKGELAQYREMAAFAQFGSDLDAATQRLLNRGARLTELLKQPQFSPLKTEEQVAVIFAGVNGYLDKLPVASVGKFEQGFLSYLRSEGSAILDAIRTEKAISDDTKGKLTAALDSFAKSFS.

Gly169–Thr176 provides a ligand contact to ATP.

Belongs to the ATPase alpha/beta chains family. As to quaternary structure, F-type ATPases have 2 components, CF(1) - the catalytic core - and CF(0) - the membrane proton channel. CF(1) has five subunits: alpha(3), beta(3), gamma(1), delta(1), epsilon(1). CF(0) has three main subunits: a(1), b(2) and c(9-12). The alpha and beta chains form an alternating ring which encloses part of the gamma chain. CF(1) is attached to CF(0) by a central stalk formed by the gamma and epsilon chains, while a peripheral stalk is formed by the delta and b chains.

The protein resides in the cell inner membrane. It catalyses the reaction ATP + H2O + 4 H(+)(in) = ADP + phosphate + 5 H(+)(out). Produces ATP from ADP in the presence of a proton gradient across the membrane. The alpha chain is a regulatory subunit. The polypeptide is ATP synthase subunit alpha (Rhizobium leguminosarum bv. trifolii (strain WSM2304)).